A 254-amino-acid chain; its full sequence is Small ribosomal subunit protein uS2 (254 aa).

Belongs to the universal ribosomal protein uS2 family.

This chain is Small ribosomal subunit protein uS2, found in Borrelia hermsii (strain HS1 / DAH).